A 543-amino-acid polypeptide reads, in one-letter code: CTP synthase (543 aa).

The tract at residues 1 to 265 (MTNYIFVTGG…DELVVQRFGL (265 aa)) is amidoligase domain. CTP is bound at residue Ser-13. Residue Ser-13 coordinates UTP. ATP-binding positions include 14–19 (SLGKGI) and Asp-71. Positions 71 and 139 each coordinate Mg(2+). CTP-binding positions include 146-148 (DIE), 186-191 (KTKPTQ), and Lys-222. Residues 186–191 (KTKPTQ) and Lys-222 each bind UTP. Residue 238–240 (KDA) coordinates ATP. The region spanning 290 to 541 (TIGMVGKYVE…VKAAGEYYKN (252 aa)) is the Glutamine amidotransferase type-1 domain. Gly-351 contributes to the L-glutamine binding site. Catalysis depends on Cys-378, which acts as the Nucleophile; for glutamine hydrolysis. Residues 379–382 (LGMQ), Glu-402, and Arg-469 contribute to the L-glutamine site. Residues His-514 and Glu-516 contribute to the active site.

This sequence belongs to the CTP synthase family. As to quaternary structure, homotetramer.

It carries out the reaction UTP + L-glutamine + ATP + H2O = CTP + L-glutamate + ADP + phosphate + 2 H(+). It catalyses the reaction L-glutamine + H2O = L-glutamate + NH4(+). The enzyme catalyses UTP + NH4(+) + ATP = CTP + ADP + phosphate + 2 H(+). Its pathway is pyrimidine metabolism; CTP biosynthesis via de novo pathway; CTP from UDP: step 2/2. Allosterically activated by GTP, when glutamine is the substrate; GTP has no effect on the reaction when ammonia is the substrate. The allosteric effector GTP functions by stabilizing the protein conformation that binds the tetrahedral intermediate(s) formed during glutamine hydrolysis. Inhibited by the product CTP, via allosteric rather than competitive inhibition. Its function is as follows. Catalyzes the ATP-dependent amination of UTP to CTP with either L-glutamine or ammonia as the source of nitrogen. Regulates intracellular CTP levels through interactions with the four ribonucleotide triphosphates. The chain is CTP synthase from Pseudoalteromonas atlantica (strain T6c / ATCC BAA-1087).